Consider the following 1099-residue polypeptide: Mediator of RNA polymerase II transcription subunit 5 (1099 aa).

The tract at residues 41–66 is disordered; that stretch reads DNDDAKTQEGSGSQDKTDVEESISKP.

Belongs to the Mediator complex subunit 5 family. As to quaternary structure, component of the Mediator complex.

The protein resides in the nucleus. Its function is as follows. Component of the Mediator complex, a coactivator involved in the regulated transcription of nearly all RNA polymerase II-dependent genes. Mediator functions as a bridge to convey information from gene-specific regulatory proteins to the basal RNA polymerase II transcription machinery. Mediator is recruited to promoters by direct interactions with regulatory proteins and serves as a scaffold for the assembly of a functional preinitiation complex with RNA polymerase II and the general transcription factors. This is Mediator of RNA polymerase II transcription subunit 5 (NUT1) from Candida glabrata (strain ATCC 2001 / BCRC 20586 / JCM 3761 / NBRC 0622 / NRRL Y-65 / CBS 138) (Yeast).